Consider the following 273-residue polypeptide: Formamidopyrimidine-DNA glycosylase (273 aa).

The Schiff-base intermediate with DNA role is filled by P2. The active-site Proton donor is E3. K58 (proton donor; for beta-elimination activity) is an active-site residue. DNA is bound by residues H92, R111, and K153. The FPG-type zinc-finger motif lies at 238–272; it reads KVYGREGQSCLSCSSTIIKIKHSGRSTFYCKTCQY. The active-site Proton donor; for delta-elimination activity is R262.

This sequence belongs to the FPG family. Monomer. It depends on Zn(2+) as a cofactor.

It carries out the reaction Hydrolysis of DNA containing ring-opened 7-methylguanine residues, releasing 2,6-diamino-4-hydroxy-5-(N-methyl)formamidopyrimidine.. The enzyme catalyses 2'-deoxyribonucleotide-(2'-deoxyribose 5'-phosphate)-2'-deoxyribonucleotide-DNA = a 3'-end 2'-deoxyribonucleotide-(2,3-dehydro-2,3-deoxyribose 5'-phosphate)-DNA + a 5'-end 5'-phospho-2'-deoxyribonucleoside-DNA + H(+). Functionally, involved in base excision repair of DNA damaged by oxidation or by mutagenic agents. Acts as a DNA glycosylase that recognizes and removes damaged bases. Has a preference for oxidized purines, such as 7,8-dihydro-8-oxoguanine (8-oxoG). Has AP (apurinic/apyrimidinic) lyase activity and introduces nicks in the DNA strand. Cleaves the DNA backbone by beta-delta elimination to generate a single-strand break at the site of the removed base with both 3'- and 5'-phosphates. The chain is Formamidopyrimidine-DNA glycosylase from Rickettsia conorii (strain ATCC VR-613 / Malish 7).